The primary structure comprises 496 residues: Alanine aminotransferase 1 (496 aa).

N-acetylalanine is present on Ala2. Thr22 carries the post-translational modification Phosphothreonine. Lys314 carries the post-translational modification N6-(pyridoxal phosphate)lysine.

The protein belongs to the class-I pyridoxal-phosphate-dependent aminotransferase family. Alanine aminotransferase subfamily. Homodimer. Pyridoxal 5'-phosphate serves as cofactor. Mainly expressed in liver, intestine, colon and white adipose tissue.

The protein localises to the cytoplasm. The enzyme catalyses L-alanine + 2-oxoglutarate = pyruvate + L-glutamate. The protein operates within amino-acid degradation; L-alanine degradation via transaminase pathway; pyruvate from L-alanine: step 1/1. In terms of biological role, catalyzes the reversible transamination between alanine and 2-oxoglutarate to form pyruvate and glutamate. Participates in cellular nitrogen metabolism and also in liver gluconeogenesis starting with precursors transported from skeletal muscles. This chain is Alanine aminotransferase 1 (Gpt), found in Mus musculus (Mouse).